The sequence spans 451 residues: UDP-glycosyltransferase 76C4 (451 aa).

UDP-alpha-D-glucose-binding positions include S273, 332–334, 349–357, and 371–374; these read APQ, HNGWNSTVE, and RWDQ.

This sequence belongs to the UDP-glycosyltransferase family.

The protein is UDP-glycosyltransferase 76C4 (UGT76C4) of Arabidopsis thaliana (Mouse-ear cress).